The chain runs to 66 residues: Large ribosomal subunit protein bL35 (66 aa).

Positions 20 to 40 (GKIKSTQSAKRHGMTKRSKRS) are disordered. Basic residues predominate over residues 28 to 40 (AKRHGMTKRSKRS).

The protein belongs to the bacterial ribosomal protein bL35 family.

The sequence is that of Large ribosomal subunit protein bL35 from Ehrlichia chaffeensis (strain ATCC CRL-10679 / Arkansas).